A 520-amino-acid polypeptide reads, in one-letter code: Probable glycine dehydrogenase (decarboxylating) subunit 2 (520 aa).

Residues 1-29 are disordered; that stretch reads MWRQSRWNEPLITEMSRRGRRGALPPRPD. N6-(pyridoxal phosphate)lysine is present on K279.

It belongs to the GcvP family. C-terminal subunit subfamily. In terms of assembly, the glycine cleavage system is composed of four proteins: P, T, L and H. In this organism, the P 'protein' is a heterodimer of two subunits. It depends on pyridoxal 5'-phosphate as a cofactor.

The enzyme catalyses N(6)-[(R)-lipoyl]-L-lysyl-[glycine-cleavage complex H protein] + glycine + H(+) = N(6)-[(R)-S(8)-aminomethyldihydrolipoyl]-L-lysyl-[glycine-cleavage complex H protein] + CO2. In terms of biological role, the glycine cleavage system catalyzes the degradation of glycine. The P protein binds the alpha-amino group of glycine through its pyridoxal phosphate cofactor; CO(2) is released and the remaining methylamine moiety is then transferred to the lipoamide cofactor of the H protein. In Aeropyrum pernix (strain ATCC 700893 / DSM 11879 / JCM 9820 / NBRC 100138 / K1), this protein is Probable glycine dehydrogenase (decarboxylating) subunit 2.